The following is a 230-amino-acid chain: Voltage-gated hydrogen channel 1 (230 aa).

The Cytoplasmic segment spans residues 1–58 (MAGCLRHFTSVGDDTKKREWKQEDVEVAYEEPLKNTPHPFIASYSFRGALKWLLSSHK). A helical membrane pass occupies residues 59–79 (FQIVIICLVILDALFVLVEVL). Topologically, residues 80-96 (LDLELLAEKVDHIIPEI) are extracellular. The chain crosses the membrane as a helical span at residues 97-119 (FHYLSISVLTFFILEIAGKLYAF). Over 120 to 127 (RLEFFHHK) the chain is Cytoplasmic. A helical transmembrane segment spans residues 128-148 (FEVFDAAIVVISFIIDIVYIS). The Extracellular segment spans residues 149–155 (REDIFNA). The chain crosses the membrane as a helical span at residues 156–176 (VGLLILLRLWRVARIVNGVIV). Residues 177–230 (SVKTRAEEKMHKLKEQKGSLLEKVAQLEQQCAQQEQEIGRLHKLLQEHNVFPAS) lie on the Cytoplasmic side of the membrane. Residues 178–225 (VKTRAEEKMHKLKEQKGSLLEKVAQLEQQCAQQEQEIGRLHKLLQEHN) adopt a coiled-coil conformation.

It belongs to the hydrogen channel family. As to quaternary structure, homodimer.

The protein localises to the membrane. It is found in the cell membrane. In terms of biological role, mediates the voltage-dependent proton permeability of excitable membranes. Forms a proton-selective channel through which protons may pass in accordance with their electrochemical gradient. The protein is Voltage-gated hydrogen channel 1 (hvcn1) of Xenopus laevis (African clawed frog).